The primary structure comprises 120 residues: Ribonuclease P protein component (120 aa).

The protein belongs to the RnpA family. As to quaternary structure, consists of a catalytic RNA component (M1 or rnpB) and a protein subunit.

The enzyme catalyses Endonucleolytic cleavage of RNA, removing 5'-extranucleotides from tRNA precursor.. RNaseP catalyzes the removal of the 5'-leader sequence from pre-tRNA to produce the mature 5'-terminus. It can also cleave other RNA substrates such as 4.5S RNA. The protein component plays an auxiliary but essential role in vivo by binding to the 5'-leader sequence and broadening the substrate specificity of the ribozyme. This chain is Ribonuclease P protein component, found in Desulfotalea psychrophila (strain LSv54 / DSM 12343).